The following is a 289-amino-acid chain: Urease accessory protein UreD (289 aa).

Belongs to the UreD family. In terms of assembly, ureD, UreF and UreG form a complex that acts as a GTP-hydrolysis-dependent molecular chaperone, activating the urease apoprotein by helping to assemble the nickel containing metallocenter of UreC. The UreE protein probably delivers the nickel.

It localises to the cytoplasm. Its function is as follows. Required for maturation of urease via the functional incorporation of the urease nickel metallocenter. In Cupriavidus pinatubonensis (strain JMP 134 / LMG 1197) (Cupriavidus necator (strain JMP 134)), this protein is Urease accessory protein UreD.